The chain runs to 542 residues: CTP synthase (542 aa).

The interval 1–265 (MTRYIFVTGG…DDFVVERFGL (265 aa)) is amidoligase domain. Serine 13 is a binding site for CTP. Residue serine 13 participates in UTP binding. ATP contacts are provided by residues 14 to 19 (SLGKGI) and aspartate 71. Residues aspartate 71 and glutamate 139 each contribute to the Mg(2+) site. CTP contacts are provided by residues 146–148 (DIE), 186–191 (KTKPTQ), and lysine 222. UTP is bound by residues 186–191 (KTKPTQ) and lysine 222. Positions 290–541 (TIAMVGKYME…VKAALAQKNK (252 aa)) constitute a Glutamine amidotransferase type-1 domain. Glycine 351 contributes to the L-glutamine binding site. Cysteine 378 serves as the catalytic Nucleophile; for glutamine hydrolysis. Residues 379 to 382 (LGMQ), glutamate 402, and arginine 469 each bind L-glutamine. Catalysis depends on residues histidine 514 and glutamate 516.

Belongs to the CTP synthase family. Homotetramer.

The catalysed reaction is UTP + L-glutamine + ATP + H2O = CTP + L-glutamate + ADP + phosphate + 2 H(+). The enzyme catalyses L-glutamine + H2O = L-glutamate + NH4(+). It catalyses the reaction UTP + NH4(+) + ATP = CTP + ADP + phosphate + 2 H(+). It participates in pyrimidine metabolism; CTP biosynthesis via de novo pathway; CTP from UDP: step 2/2. With respect to regulation, allosterically activated by GTP, when glutamine is the substrate; GTP has no effect on the reaction when ammonia is the substrate. The allosteric effector GTP functions by stabilizing the protein conformation that binds the tetrahedral intermediate(s) formed during glutamine hydrolysis. Inhibited by the product CTP, via allosteric rather than competitive inhibition. Catalyzes the ATP-dependent amination of UTP to CTP with either L-glutamine or ammonia as the source of nitrogen. Regulates intracellular CTP levels through interactions with the four ribonucleotide triphosphates. This chain is CTP synthase, found in Pseudomonas entomophila (strain L48).